A 311-amino-acid chain; its full sequence is Triacylglycerol lipase (311 aa).

A signal peptide spans 1–26; that stretch reads MKKKSLLPLGLAIGLASLAASPLIQA. The 246-residue stretch at 35–280 folds into the AB hydrolase-1 domain; sequence PIVLAHGMLG…DNYRMNHLDE (246 aa). Met42 contacts substrate. Ser108 functions as the Nucleophile in the catalytic mechanism. Residue His109 coordinates substrate. Cys209 and Cys261 are joined by a disulfide. Residue Asp235 participates in Ca(2+) binding. Catalysis depends on charge relay system residues Asp255 and His277. Residues Asp279, Gln283, and Leu287 each coordinate Ca(2+).

It belongs to the AB hydrolase superfamily. Pseudomonas lipase family. In terms of assembly, monomer. It depends on Ca(2+) as a cofactor.

It is found in the secreted. It carries out the reaction a triacylglycerol + H2O = a diacylglycerol + a fatty acid + H(+). Its function is as follows. Catalyzes the hydrolysis of triacylglycerol. Also able to catalyze, in anhydrous organic solvents, intramolecular transesterification of omega-hydroxyfatty acid esters to form macrocyclic lactones. This biosynthesis is dependent on the chain length of the substrates, and the formation of monomer lactone is maximum with methyl 18-hydroxyoctadecanoate. With shorter substrates, monomer lactone decreases and the formation of diolide (dimer lactone) increases. The sequence is that of Triacylglycerol lipase from Pseudomonas sp. (strain 109).